The primary structure comprises 1085 residues: Mitotic checkpoint serine/threonine-protein kinase BUB1 (1085 aa).

The segment at 1–146 is necessary for kinetochore localization; it reads MDTPENVLQM…QQQYRLFQTR (146 aa). One can recognise a BUB1 N-terminal domain in the interval 11–182; it reads LEAHMQSYKG…TSKSNPGNNM (172 aa). The Nuclear localization signal signature appears at 58–65; the sequence is DKKKYHND. A necessary for interaction with KNL1 region spans residues 99 to 132; the sequence is SPLYIAWAGHLEAQGELQHASAVLQRGIQNQAEP. The necessary for interaction with BUB3 stretch occupies residues 229-256; that stretch reads VDVEQVVMYCKEKLIRGESEFSFEELRA. Residues 305–333 form a disordered region; that stretch reads ETSHEDLPASQERSEVNPARMGPSVGSQQ. The span at 306–319 shows a compositional bias: basic and acidic residues; that stretch reads TSHEDLPASQERSE. Residues serine 307, serine 314, serine 331, and serine 375 each carry the phosphoserine modification. An essential for loading of BUBR1, MAD1L1 and MAD2L1 to kinetochores region spans residues 458–476; sequence PSPTVHTKEALGFIMNMFQ. At serine 525 the chain carries Phosphoserine. Residues 535 to 537 carry the KEN box 1 motif; that stretch reads KEN. Residues 538-570 form a disordered region; that stretch reads YGLPQPKNKPTGARTFGERSVSRLPSKPKEEVP. The segment covering 553 to 570 has biased composition (basic and acidic residues); it reads FGERSVSRLPSKPKEEVP. Serine 563, serine 593, and serine 596 each carry phosphoserine. Threonine 609 carries the phosphothreonine; by CDK1 modification. The KEN box 2 signature appears at 625-627; that stretch reads KEN. 4 positions are modified to phosphoserine: serine 655, serine 661, serine 668, and serine 672. Residues 787 to 1085 form the Protein kinase domain; sequence VYVHHLLGEG…LLLECKRSRK (299 aa). ATP contacts are provided by residues 793-801 and lysine 821; that span reads LGEGAFAQV. The active-site Proton acceptor is the aspartate 917.

Belongs to the protein kinase superfamily. Ser/Thr protein kinase family. BUB1 subfamily. In terms of assembly, interacts with BUB3 and KNL1. Interacts (when phosphorylated) with PLK1. The BUB1-BUB3 complex interacts with MAD1L1. (Microbial infection) Interacts with SV40 Large T antigen; this interaction induces activation of a DNA damage response and promotes p53/TP53 stabilization and phosphorylation. As to quaternary structure, (Microbial infection) Interacts with herpes virus 8 protein LANA1. Upon spindle-assembly checkpoint activation it is hyperphosphorylated and its kinase activity toward CDC20 is stimulated. Phosphorylation at Thr-609 is required for interaction with PLK1, phosphorylation at this site probably creates a binding site for the POLO-box domain of PLK1, thus enhancing the PLK1-BUB1 interaction. In terms of processing, ubiquitinated and degraded during mitotic exit by APC/C-Cdh1. As to expression, high expression in testis and thymus, less in colon, spleen, lung and small intestine. Expressed in fetal thymus, bone marrow, heart, liver, spleen and thymus. Expression is associated with cells/tissues with a high mitotic index.

It localises to the nucleus. The protein localises to the chromosome. The protein resides in the centromere. It is found in the kinetochore. It carries out the reaction L-seryl-[protein] + ATP = O-phospho-L-seryl-[protein] + ADP + H(+). The catalysed reaction is L-threonyl-[protein] + ATP = O-phospho-L-threonyl-[protein] + ADP + H(+). Its activity is regulated as follows. Autophosphorylated when the cells enters mitosis. Serine/threonine-protein kinase that performs 2 crucial functions during mitosis: it is essential for spindle-assembly checkpoint signaling and for correct chromosome alignment. Has a key role in the assembly of checkpoint proteins at the kinetochore, being required for the subsequent localization of CENPF, BUB1B, CENPE and MAD2L1. Required for the kinetochore localization of PLK1. Required for centromeric enrichment of AUKRB in prometaphase. Plays an important role in defining SGO1 localization and thereby affects sister chromatid cohesion. Promotes the centromeric localization of TOP2A. Acts as a substrate for anaphase-promoting complex or cyclosome (APC/C) in complex with its activator CDH1 (APC/C-Cdh1). Necessary for ensuring proper chromosome segregation and binding to BUB3 is essential for this function. Can regulate chromosome segregation in a kinetochore-independent manner. Can phosphorylate BUB3. The BUB1-BUB3 complex plays a role in the inhibition of APC/C when spindle-assembly checkpoint is activated and inhibits the ubiquitin ligase activity of APC/C by phosphorylating its activator CDC20. This complex can also phosphorylate MAD1L1. Kinase activity is essential for inhibition of APC/CCDC20 and for chromosome alignment but does not play a major role in the spindle-assembly checkpoint activity. Mediates cell death in response to chromosome missegregation and acts to suppress spontaneous tumorigenesis. The protein is Mitotic checkpoint serine/threonine-protein kinase BUB1 (BUB1) of Homo sapiens (Human).